A 387-amino-acid polypeptide reads, in one-letter code: MKFVDEAVIRVEAGDGGSGCVSFRREKYVPDGGPDGGDGGDGGSVYLQADENLNTLIDYRFERFHFAERGENGRGRDCTGHGGKDLILKVPVGTRAVDEETQEALGDLKTHGQKLLVAKGGFHGLGNTRFKSSTNRAPRQKTLGTPGEVRSLRLELMLLADVGLLGMPNAGKSTFIRSVSRAKPKVADYPFTTLVPNLGVVTPRHGQSFVIADIPGLIEGAAEGAGLGIRFLKHLERCRVLLHILDIEPIDGSDPVDSARAIVGELEKHSPLLASKPRWLVFNKTDLLLEEELQERVDRIVKELDWQGDVYCISAYNREGTQELALKLMDFIDALPPEVEEDPDAEVEFKWDNYHQKTQEVVNEDYDDDFDDDFDDDDYDVEIIYQR.

One can recognise an Obg domain in the interval 1–159 (MKFVDEAVIR…RSLRLELMLL (159 aa)). In terms of domain architecture, OBG-type G spans 160-333 (ADVGLLGMPN…LALKLMDFID (174 aa)). GTP is bound by residues 166–173 (GMPNAGKS), 191–195 (FTTLV), 213–216 (DIPG), 283–286 (NKTD), and 314–316 (SAY). Mg(2+) is bound by residues Ser-173 and Thr-193.

This sequence belongs to the TRAFAC class OBG-HflX-like GTPase superfamily. OBG GTPase family. Monomer. Mg(2+) is required as a cofactor.

Its subcellular location is the cytoplasm. In terms of biological role, an essential GTPase which binds GTP, GDP and possibly (p)ppGpp with moderate affinity, with high nucleotide exchange rates and a fairly low GTP hydrolysis rate. Plays a role in control of the cell cycle, stress response, ribosome biogenesis and in those bacteria that undergo differentiation, in morphogenesis control. This chain is GTPase Obg, found in Shewanella loihica (strain ATCC BAA-1088 / PV-4).